Consider the following 344-residue polypeptide: Small ribosomal subunit biogenesis GTPase RsgA (344 aa).

In terms of domain architecture, CP-type G spans 100–268 (KNELSRPDYY…LIDSPGIREF (169 aa)). GTP is bound by residues 156–159 (NKID) and 210–218 (GQSGVGKSS). Zn(2+)-binding residues include Cys292, Cys297, His299, and Cys305.

This sequence belongs to the TRAFAC class YlqF/YawG GTPase family. RsgA subfamily. As to quaternary structure, monomer. Associates with 30S ribosomal subunit, binds 16S rRNA. Requires Zn(2+) as cofactor.

It is found in the cytoplasm. In terms of biological role, one of several proteins that assist in the late maturation steps of the functional core of the 30S ribosomal subunit. Helps release RbfA from mature subunits. May play a role in the assembly of ribosomal proteins into the subunit. Circularly permuted GTPase that catalyzes slow GTP hydrolysis, GTPase activity is stimulated by the 30S ribosomal subunit. This chain is Small ribosomal subunit biogenesis GTPase RsgA, found in Actinobacillus pleuropneumoniae serotype 5b (strain L20).